The following is a 321-amino-acid chain: Lipoyl synthase (321 aa).

The [4Fe-4S] cluster site is built by Cys-68, Cys-73, Cys-79, Cys-94, Cys-98, Cys-101, and Ser-308. Positions 80-297 (FNHGTATFMI…REFAESIGFT (218 aa)) constitute a Radical SAM core domain.

Belongs to the radical SAM superfamily. Lipoyl synthase family. The cofactor is [4Fe-4S] cluster.

The protein localises to the cytoplasm. It catalyses the reaction [[Fe-S] cluster scaffold protein carrying a second [4Fe-4S](2+) cluster] + N(6)-octanoyl-L-lysyl-[protein] + 2 oxidized [2Fe-2S]-[ferredoxin] + 2 S-adenosyl-L-methionine + 4 H(+) = [[Fe-S] cluster scaffold protein] + N(6)-[(R)-dihydrolipoyl]-L-lysyl-[protein] + 4 Fe(3+) + 2 hydrogen sulfide + 2 5'-deoxyadenosine + 2 L-methionine + 2 reduced [2Fe-2S]-[ferredoxin]. The protein operates within protein modification; protein lipoylation via endogenous pathway; protein N(6)-(lipoyl)lysine from octanoyl-[acyl-carrier-protein]: step 2/2. Catalyzes the radical-mediated insertion of two sulfur atoms into the C-6 and C-8 positions of the octanoyl moiety bound to the lipoyl domains of lipoate-dependent enzymes, thereby converting the octanoylated domains into lipoylated derivatives. The polypeptide is Lipoyl synthase (Shewanella sediminis (strain HAW-EB3)).